The following is a 226-amino-acid chain: Ribonuclease 3 (226 aa).

The RNase III domain occupies 6 to 128 (TKKIQKVLGY…LIGSIYLDSN (123 aa)). Residue Glu-41 coordinates Mg(2+). Asp-45 is a catalytic residue. Residues Asn-114 and Glu-117 each contribute to the Mg(2+) site. Residue Glu-117 is part of the active site. Residues 155–225 (DPKTRLQEYL…AQKALIKLGV (71 aa)) enclose the DRBM domain.

This sequence belongs to the ribonuclease III family. Homodimer. Mg(2+) serves as cofactor.

The protein resides in the cytoplasm. The enzyme catalyses Endonucleolytic cleavage to 5'-phosphomonoester.. Functionally, digests double-stranded RNA. Involved in the processing of primary rRNA transcript to yield the immediate precursors to the large and small rRNAs (23S and 16S). Processes some mRNAs, and tRNAs when they are encoded in the rRNA operon. Processes pre-crRNA and tracrRNA of type II CRISPR loci if present in the organism. The protein is Ribonuclease 3 of Buchnera aphidicola subsp. Acyrthosiphon pisum (strain 5A).